Here is a 266-residue protein sequence, read N- to C-terminus: MRLIPLATAEQVGKWAARHIVNRINAFKPTADRPFVLGLPTGGTPLTAYKALVEMHKAGQVSFKHVVTFNMDEYVGLAKEHPESYHSFMHRNFFDHVDIPAENINLLNGNAPDIDAECRQYEEKIRSYGKINLFMGGVGNDGHIAFNEPASSLASRTRIKTLTHDTRVANSRFFDGDVSQVPKYALTVGVGTLLDAEEVMILVLGNVKAQALQAAVEGNVNHMWTISCLQLHPKAVVVCDEPSTMELKVKTLKYFNELEAENIKGL.

Asp-72 serves as the catalytic Proton acceptor; for enolization step. Asp-141 functions as the For ring-opening step in the catalytic mechanism. The active-site Proton acceptor; for ring-opening step is the His-143. The active-site For ring-opening step is the Glu-148.

The protein belongs to the glucosamine/galactosamine-6-phosphate isomerase family. NagB subfamily. Homohexamer.

The enzyme catalyses alpha-D-glucosamine 6-phosphate + H2O = beta-D-fructose 6-phosphate + NH4(+). It functions in the pathway amino-sugar metabolism; N-acetylneuraminate degradation; D-fructose 6-phosphate from N-acetylneuraminate: step 5/5. Its activity is regulated as follows. Allosterically activated by N-acetylglucosamine 6-phosphate (GlcNAc6P). In terms of biological role, catalyzes the reversible isomerization-deamination of glucosamine 6-phosphate (GlcN6P) to form fructose 6-phosphate (Fru6P) and ammonium ion. In Enterobacter sp. (strain 638), this protein is Glucosamine-6-phosphate deaminase.